The chain runs to 639 residues: UvrABC system protein C (639 aa).

In terms of domain architecture, GIY-YIG spans 20 to 97; sequence ERSGVYRMFD…IKKFQPKFNI (78 aa). The UVR domain occupies 207–242; the sequence is KELQENLSRKMEELSSQMRFEEAAEIRDRIKALSYV.

Belongs to the UvrC family. In terms of assembly, interacts with UvrB in an incision complex.

It localises to the cytoplasm. The UvrABC repair system catalyzes the recognition and processing of DNA lesions. UvrC both incises the 5' and 3' sides of the lesion. The N-terminal half is responsible for the 3' incision and the C-terminal half is responsible for the 5' incision. The polypeptide is UvrABC system protein C (Rickettsia rickettsii (strain Iowa)).